The sequence spans 324 residues: DNA repair and recombination protein RadA (324 aa).

114–121 lines the ATP pocket; the sequence is GEFGSGKT.

Belongs to the eukaryotic RecA-like protein family.

In terms of biological role, involved in DNA repair and in homologous recombination. Binds and assemble on single-stranded DNA to form a nucleoprotein filament. Hydrolyzes ATP in a ssDNA-dependent manner and promotes DNA strand exchange between homologous DNA molecules. The chain is DNA repair and recombination protein RadA from Saccharolobus islandicus (strain Y.N.15.51 / Yellowstone #2) (Sulfolobus islandicus).